Reading from the N-terminus, the 247-residue chain is Chymase (247 aa).

Positions methionine 1–alanine 19 are cleaved as a signal peptide. The propeptide at glycine 20 to glutamate 21 is activation peptide. The region spanning isoleucine 22 to arginine 245 is the Peptidase S1 domain. A disulfide bridge links cysteine 51 with cysteine 67. The Charge relay system role is filled by histidine 66. An N-linked (GlcNAc...) asparagine glycan is attached at asparagine 80. Aspartate 110 functions as the Charge relay system in the catalytic mechanism. 2 disulfides stabilise this stretch: cysteine 144/cysteine 209 and cysteine 175/cysteine 188. The active-site Charge relay system is serine 203.

It belongs to the peptidase S1 family. Granzyme subfamily. As to expression, mast cells.

It is found in the secreted. Its subcellular location is the cytoplasmic granule. It carries out the reaction Preferential cleavage: Phe-|-Xaa &gt; Tyr-|-Xaa &gt; Trp-|-Xaa &gt; Leu-|-Xaa.. Its function is as follows. Major secreted protease of mast cells with suspected roles in vasoactive peptide generation, extracellular matrix degradation, and regulation of gland secretion. The protein is Chymase (Cma1) of Rattus norvegicus (Rat).